A 161-amino-acid chain; its full sequence is MKLSDIADNAGARKKRMRVGRGIGSGKGKTSGRGGKGQTARSGVRIKGFEGGQMPMHRRLPKRGFNNIFALDFVEINLDRIQQAIDAKKLDAGSVINAESLVKSGALRRSKDGVRLLGRGELKAKINIEVYGASKSAIAAVEKAGGTVKILAPAKDEGEAA.

A disordered region spans residues 1-43 (MKLSDIADNAGARKKRMRVGRGIGSGKGKTSGRGGKGQTARSG). Residues 21 to 37 (RGIGSGKGKTSGRGGKG) show a composition bias toward gly residues.

Belongs to the universal ribosomal protein uL15 family. As to quaternary structure, part of the 50S ribosomal subunit.

Functionally, binds to the 23S rRNA. The protein is Large ribosomal subunit protein uL15 of Bradyrhizobium sp. (strain ORS 278).